A 567-amino-acid chain; its full sequence is Fanconi anemia group C protein homolog (567 aa).

As to quaternary structure, belongs to the multisubunit FA complex composed of FANCA, FANCB, FANCC, FANCE, FANCF, FANCG, FANCL/PHF9 and FANCM. This complex may also include HSP70. Interacts with ZBTB32. Upon IFNG induction, interacts with STAT1. Interacts with CDK1. Interacts with EIF2AK2.

The protein localises to the nucleus. The protein resides in the cytoplasm. Its function is as follows. DNA repair protein that may operate in a postreplication repair or a cell cycle checkpoint function. May be implicated in interstrand DNA cross-link repair and in the maintenance of normal chromosome stability. Upon IFNG induction, may facilitate STAT1 activation by recruiting STAT1 to IFNGR1. The polypeptide is Fanconi anemia group C protein homolog (FANCC) (Bos taurus (Bovine)).